The primary structure comprises 436 residues: Origin recognition complex subunit 4 (436 aa).

An N6-methyllysine modification is found at lysine 7. 67-74 (GPRGSGKT) serves as a coordination point for ATP.

It belongs to the ORC4 family. Component of ORC, a complex composed of at least 6 subunits: ORC1, ORC2, ORC3, ORC4, ORC5 and ORC6. ORC is regulated in a cell-cycle dependent manner. It is sequentially assembled at the exit from anaphase of mitosis and disassembled as cells enter S phase. Interacts with DBF4. Interacts with POLQ.

Its subcellular location is the nucleus. Component of the origin recognition complex (ORC) that binds origins of replication. DNA-binding is ATP-dependent. The specific DNA sequences that define origins of replication have not been identified yet. ORC is required to assemble the pre-replication complex necessary to initiate DNA replication. Binds histone H3 and H4 trimethylation marks H3K9me3, H3K27me3 and H4K20me3. In Pongo abelii (Sumatran orangutan), this protein is Origin recognition complex subunit 4 (ORC4).